Reading from the N-terminus, the 172-residue chain is Crossover junction endodeoxyribonuclease RuvC (172 aa).

Catalysis depends on residues D7, E68, and D141. D7, E68, and D141 together coordinate Mg(2+).

It belongs to the RuvC family. Homodimer which binds Holliday junction (HJ) DNA. The HJ becomes 2-fold symmetrical on binding to RuvC with unstacked arms; it has a different conformation from HJ DNA in complex with RuvA. In the full resolvosome a probable DNA-RuvA(4)-RuvB(12)-RuvC(2) complex forms which resolves the HJ. Mg(2+) is required as a cofactor.

Its subcellular location is the cytoplasm. The enzyme catalyses Endonucleolytic cleavage at a junction such as a reciprocal single-stranded crossover between two homologous DNA duplexes (Holliday junction).. In terms of biological role, the RuvA-RuvB-RuvC complex processes Holliday junction (HJ) DNA during genetic recombination and DNA repair. Endonuclease that resolves HJ intermediates. Cleaves cruciform DNA by making single-stranded nicks across the HJ at symmetrical positions within the homologous arms, yielding a 5'-phosphate and a 3'-hydroxyl group; requires a central core of homology in the junction. The consensus cleavage sequence is 5'-(A/T)TT(C/G)-3'. Cleavage occurs on the 3'-side of the TT dinucleotide at the point of strand exchange. HJ branch migration catalyzed by RuvA-RuvB allows RuvC to scan DNA until it finds its consensus sequence, where it cleaves and resolves the cruciform DNA. The polypeptide is Crossover junction endodeoxyribonuclease RuvC (Frankia casuarinae (strain DSM 45818 / CECT 9043 / HFP020203 / CcI3)).